The primary structure comprises 190 residues: Threonylcarbamoyl-AMP synthase (190 aa).

In terms of domain architecture, YrdC-like spans 7-190 (IGSIAAAVDL…ALTGELFRQG (184 aa)).

The protein belongs to the SUA5 family. TsaC subfamily.

Its subcellular location is the cytoplasm. It carries out the reaction L-threonine + hydrogencarbonate + ATP = L-threonylcarbamoyladenylate + diphosphate + H2O. Required for the formation of a threonylcarbamoyl group on adenosine at position 37 (t(6)A37) in tRNAs that read codons beginning with adenine. Catalyzes the conversion of L-threonine, HCO(3)(-)/CO(2) and ATP to give threonylcarbamoyl-AMP (TC-AMP) as the acyladenylate intermediate, with the release of diphosphate. This Salmonella typhimurium (strain LT2 / SGSC1412 / ATCC 700720) protein is Threonylcarbamoyl-AMP synthase.